Here is a 330-residue protein sequence, read N- to C-terminus: Membrane-associated protein VIPP1, chloroplastic (330 aa).

A chloroplast-targeting transit peptide spans 1-64 (MALKASPVTG…LRLACDNRLR (64 aa)). Coiled-coil stretches lie at residues 124–259 (SQKQ…LTQI) and 312–329 (KDSE…KAND). Residues 287 to 312 (LSGSSKKGELPPGRSTVAASTRYPFK) are disordered.

The protein belongs to the PspA/Vipp/IM30 family. As to quaternary structure, homomultimer. Complex formation involves interaction via the central alpha-helical domain (71-286).

Its subcellular location is the plastid. The protein resides in the chloroplast inner membrane. The protein localises to the chloroplast thylakoid membrane. Required for plastid vesicle formation and thylakoid membrane biogenesis, but not for functional assembly of thylakoid protein complexes. In Arabidopsis thaliana (Mouse-ear cress), this protein is Membrane-associated protein VIPP1, chloroplastic.